The following is a 219-amino-acid chain: Uracil-DNA glycosylase (219 aa).

Residue aspartate 61 is the Proton acceptor of the active site.

This sequence belongs to the uracil-DNA glycosylase (UDG) superfamily. UNG family.

Its subcellular location is the cytoplasm. It carries out the reaction Hydrolyzes single-stranded DNA or mismatched double-stranded DNA and polynucleotides, releasing free uracil.. Excises uracil residues from the DNA which can arise as a result of misincorporation of dUMP residues by DNA polymerase or due to deamination of cytosine. The polypeptide is Uracil-DNA glycosylase (Haemophilus influenzae (strain 86-028NP)).